The chain runs to 97 residues: Large ribosomal subunit protein bL28 (97 aa).

The tract at residues 1–20 (MSRRCELTAKGPQVGHKVSH) is disordered.

Belongs to the bacterial ribosomal protein bL28 family.

The polypeptide is Large ribosomal subunit protein bL28 (Afipia carboxidovorans (strain ATCC 49405 / DSM 1227 / KCTC 32145 / OM5) (Oligotropha carboxidovorans)).